We begin with the raw amino-acid sequence, 366 residues long: Peptide chain release factor 2 (366 aa).

Gln-251 carries the N5-methylglutamine modification.

Belongs to the prokaryotic/mitochondrial release factor family. In terms of processing, methylated by PrmC. Methylation increases the termination efficiency of RF2.

It localises to the cytoplasm. Its function is as follows. Peptide chain release factor 2 directs the termination of translation in response to the peptide chain termination codons UGA and UAA. This Bacillus subtilis (strain 168) protein is Peptide chain release factor 2 (prfB).